The sequence spans 248 residues: PF03932 family protein CutC (248 aa).

This sequence belongs to the CutC family. Homodimer.

It localises to the cytoplasm. This Escherichia coli O7:K1 (strain IAI39 / ExPEC) protein is PF03932 family protein CutC.